A 565-amino-acid polypeptide reads, in one-letter code: MWLCALALASLAACTAWGHPSAPPVVDTVHGKVLGKFVSLEGFAQPVAVFLGVPFAKPPLGSLRFAPPQPAESWSHVKNTTSYPPMCSQDAVSGHMLSELFTNRKENIPLKFSEDCLYLNIYTPADLTKRGRLPVMVWIHGGGLMVGGASTYDGLALSAHENVVVVTIQYRLGIWGFFSTGDEHSRGNWGHLDQVAALRWVQDNIANFGGDPGSVTIFGESAGGQSVSILLLSPLTKNLFHRAISESGVALLSSLFRKNTKSLAEKIAIEAGCKTTTSAVMVHCLRQKTEEELMEVTLKMKFMALDLVGDPKENTAFLTTVIDGVLLPKAPAEILAEKKYNMLPYMVGINQQEFGWIIPMQMLGYPLSEGKLDQKTATELLWKSYPIVNVSKELTPVATEKYLGGTDDPVKKKDLFLDMLADLLFGVPSVNVARHHRDAGAPTYMYEYRYRPSFSSDMRPKTVIGDHGDEIFSVLGAPFLKEGATEEEIKLSKMVMKYWANFARNGNPNGEGLPQWPAYDYKEGYLQIGATTQAAQKLKDKEVAFWTELWAKEAARPRETEHIEL.

The first 18 residues, 1–18 (MWLCALALASLAACTAWG), serve as a signal peptide directing secretion. An N-linked (GlcNAc...) asparagine glycan is attached at Asn79. Cysteines 87 and 116 form a disulfide. Ser221 functions as the Acyl-ester intermediate in the catalytic mechanism. Residues Cys273 and Cys284 are joined by a disulfide bond. Catalysis depends on Glu353, which acts as the Charge relay system. An N-linked (GlcNAc...) asparagine glycan is attached at Asn389. His467 serves as the catalytic Charge relay system. Leu565 is a short sequence motif (prevents secretion from ER).

It belongs to the type-B carboxylesterase/lipase family. In terms of assembly, monomer.

It localises to the endoplasmic reticulum lumen. It catalyses the reaction a carboxylic ester + H2O = an alcohol + a carboxylate + H(+). Functionally, involved in the detoxification of xenobiotics and in the activation of ester and amide prodrugs. The sequence is that of Liver carboxylesterase 1 from Oryctolagus cuniculus (Rabbit).